We begin with the raw amino-acid sequence, 347 residues long: Protein RecA (347 aa).

ATP is bound at residue 65 to 72; it reads GPESSGKT. A compositionally biased stretch (basic and acidic residues) spans 327–336; sequence KFEPTELSRE. The interval 327-347 is disordered; the sequence is KFEPTELSREEGDEDTLEDTM. Over residues 337–347 the composition is skewed to acidic residues; the sequence is EGDEDTLEDTM.

The protein belongs to the RecA family.

The protein resides in the cytoplasm. Functionally, can catalyze the hydrolysis of ATP in the presence of single-stranded DNA, the ATP-dependent uptake of single-stranded DNA by duplex DNA, and the ATP-dependent hybridization of homologous single-stranded DNAs. It interacts with LexA causing its activation and leading to its autocatalytic cleavage. This is Protein RecA from Xylella fastidiosa (strain 9a5c).